Consider the following 1559-residue polypeptide: Bile pigment transporter 1 (1559 aa).

Residues 1–29 (MSSLEVVDGCPYGYRPYPDSGTNALNPCF) are Vacuolar-facing. A helical transmembrane segment spans residues 30-50 (ISVISAWQAVFFLLIGSYQLW). At 51 to 84 (KLYKNNKVPPRFKNFPTLPSKINSRHLTHLTNVC) the chain is on the cytoplasmic side. The helical transmembrane segment at 85-105 (FQSTLIICELALVSQSSDRVY) threads the bilayer. Over 106-110 (PFILK) the chain is Vacuolar. The chain crosses the membrane as a helical span at residues 111–127 (KALYLNLLFNLGISLPT). The Cytoplasmic portion of the chain corresponds to 128–139 (QYLAYFKSTFSM). The helical transmembrane segment at 140-160 (GNQLFYYMFQILLQLFLILQR) threads the bilayer. The Vacuolar segment spans residues 161–178 (YYHGSSNERLTVISGQTA). Residues 179–199 (MILEVLLLFNSVAIFIYDLCI) traverse the membrane as a helical segment. Residues 200-283 (FEPINELSEY…WLNRNSLWRA (84 aa)) lie on the Cytoplasmic side of the membrane. Residues 284-304 (IWKSFGRTISVAMLYETTSDL) traverse the membrane as a helical segment. Positions 292 to 578 (ISVAMLYETT…VPSMINTIIE (287 aa)) constitute an ABC transmembrane type-1 1 domain. Residues 305–333 (LSVVQPQFLRIFIDGLNPETSSKYPPLNG) lie on the Vacuolar side of the membrane. The chain crosses the membrane as a helical span at residues 334 to 354 (VFIALTLFVISVVSVFLTNQF). The Cytoplasmic portion of the chain corresponds to 355 to 410 (YIGIFEAGLGIRGSLASLVYQKSLRLTLAERNEKSTGDILNLMSVDVLRIQRFFEN). Residues 411 to 431 (AQTIIGAPIQIIVVLTSLYWL) traverse the membrane as a helical segment. At 432-434 (LGK) the chain is on the vacuolar side. A helical membrane pass occupies residues 435 to 455 (AVIGGLVTMAIMMPINAFLSR). The Cytoplasmic portion of the chain corresponds to 456–518 (KVKKLSKTQM…NFRKIGIVSN (63 aa)). A helical transmembrane segment spans residues 519–539 (LIYFAWNCVPLMVTCSTFGLF). Over 540–560 (SLFSDSPLSPAIVFPSLSLFN) the chain is Vacuolar. Residues 561-581 (ILNSAIYSVPSMINTIIETSV) form a helical membrane-spanning segment. At 582–972 (SMERLKSFLL…VKTKIYLAYI (391 aa)) the chain is on the cytoplasmic side. Residues 639 to 871 (LRTDEESIIG…KNNTSKLKKL (233 aa)) enclose the ABC transporter 1 domain. Position 645 is a phosphoserine (Ser645). Position 672–679 (672–679 (GRVGAGKS)) interacts with ATP. Residues 877-899 (SPIDNGNESDVQTEHRSESEVDE) are disordered. Phosphoserine is present on Ser885. Thr889 is subject to Phosphothreonine. A phosphoserine mark is found at Ser893 and Ser895. Thr916 bears the Phosphothreonine mark. 2 positions are modified to phosphoserine: Ser927 and Ser931. Thr934 is subject to Phosphothreonine. The helical transmembrane segment at 973–993 (KACGVLGVVLFFLFMILTRVF) threads the bilayer. In terms of domain architecture, ABC transmembrane type-1 2 spans 980 to 1265 (VVLFFLFMIL…IVRTTVTIET (286 aa)). Residues 994 to 1030 (DLAENFWLKYWSESNEKNGSNERVWMFVGVYSLIGVA) are Vacuolar-facing. Residue Asn1011 is glycosylated (N-linked (GlcNAc...) asparagine). Residues 1031–1052 (SAAFNNLRSIMMLLYCSIRGSK) form a helical membrane-spanning segment. Residues 1053-1095 (KLHESMAKSVIRSPMTFFETTPVGRIINRFSSDMDAVDSNLQY) are Cytoplasmic-facing. Residues 1096–1116 (IFSFFFKSILTYLVTVILVGY) form a helical membrane-spanning segment. Asn1117 is a topological domain (vacuolar). The helical transmembrane segment at 1118–1138 (MPWFLVFNMFLVVIYIYYQTF) threads the bilayer. The Cytoplasmic segment spans residues 1139–1209 (YIVLSRELKR…STNRWLSVRL (71 aa)). The helical transmembrane segment at 1210–1230 (QTIGATIVLATAILALATMNT) threads the bilayer. Over 1231-1235 (KRQLS) the chain is Vacuolar. Residues 1236–1256 (SGMVGLLMSYSLEVTGSLTWI) form a helical membrane-spanning segment. Over 1257–1559 (VRTTVTIETN…SLCEKGGYLK (303 aa)) the chain is Cytoplasmic. Residues 1302 to 1553 (IEFKNYSTKY…KTSIFYSLCE (252 aa)) form the ABC transporter 2 domain. 1336-1343 (GRTGAGKS) contributes to the ATP binding site. The span at 1420–1433 (HLEKMLHSKPRGDD) shows a compositional bias: basic and acidic residues. The disordered stretch occupies residues 1420-1439 (HLEKMLHSKPRGDDSNEEDG).

The protein belongs to the ABC transporter superfamily.

Its subcellular location is the vacuole membrane. In terms of biological role, cooperates for the ATP-dependent vacuolar transport of bilirubin and glutathione conjugates. The chain is Bile pigment transporter 1 (BPT1) from Saccharomyces cerevisiae (strain ATCC 204508 / S288c) (Baker's yeast).